A 200-amino-acid polypeptide reads, in one-letter code: MGSYTIPNVVERTPQGERSYDVFSRLLSERIIFLGTEIDDGVANVVIAQLLHLESANPEHEIAIYINSPGGSFTSLMAIYDTMTFVQAPISTFCVGQAASTAAVLLAGGDPGRRFVLEHARVLLGQPASGGRQGTVSDLSLQAKEMIRIRSQVEEVLSRHTRHDIATLRADMDRDKVFTAQEAVAYGLADEVLSRRLAVV.

The active-site Nucleophile is the Ser100.

Belongs to the peptidase S14 family. Fourteen ClpP subunits assemble into 2 heptameric rings which stack back to back to give a disk-like structure with a central cavity, resembling the structure of eukaryotic proteasomes.

Its subcellular location is the cytoplasm. It catalyses the reaction Hydrolysis of proteins to small peptides in the presence of ATP and magnesium. alpha-casein is the usual test substrate. In the absence of ATP, only oligopeptides shorter than five residues are hydrolyzed (such as succinyl-Leu-Tyr-|-NHMec, and Leu-Tyr-Leu-|-Tyr-Trp, in which cleavage of the -Tyr-|-Leu- and -Tyr-|-Trp bonds also occurs).. Cleaves peptides in various proteins in a process that requires ATP hydrolysis. Has a chymotrypsin-like activity. Plays a major role in the degradation of misfolded proteins. In Streptomyces avermitilis (strain ATCC 31267 / DSM 46492 / JCM 5070 / NBRC 14893 / NCIMB 12804 / NRRL 8165 / MA-4680), this protein is ATP-dependent Clp protease proteolytic subunit 2.